The sequence spans 197 residues: LexA repressor (197 aa).

The H-T-H motif DNA-binding region spans Val28–Ile47. Active-site for autocatalytic cleavage activity residues include Ser119 and Lys156.

This sequence belongs to the peptidase S24 family. Homodimer.

The enzyme catalyses Hydrolysis of Ala-|-Gly bond in repressor LexA.. Represses a number of genes involved in the response to DNA damage (SOS response), including recA and lexA. In the presence of single-stranded DNA, RecA interacts with LexA causing an autocatalytic cleavage which disrupts the DNA-binding part of LexA, leading to derepression of the SOS regulon and eventually DNA repair. The chain is LexA repressor from Thermotoga petrophila (strain ATCC BAA-488 / DSM 13995 / JCM 10881 / RKU-1).